Consider the following 748-residue polypeptide: WD repeat-containing protein 91 (748 aa).

The stretch at 183–228 forms a coiled coil; the sequence is QRTNQVQEENEVLRQKLFALQAEIHRLKKEEQQQEEEAAALVQHKL. Residue serine 257 is modified to Phosphoserine. Low complexity predominate over residues 266 to 279; the sequence is LLPQSKKSPSRLSP. The disordered stretch occupies residues 266-368; sequence LLPQSKKSPS…PEVSGAEAEP (103 aa). Polar residues predominate over residues 284–300; the sequence is PQAQSSAKKDSFSSQAT. Residues serine 289 and serine 294 each carry the phosphoserine modification. Basic and acidic residues predominate over residues 333–344; sequence RLQDHGKERREL. Over residues 345–354 the composition is skewed to polar residues; it reads LSTSSSQSQC. 7 WD repeats span residues 407 to 446, 449 to 489, 512 to 556, 561 to 600, 603 to 642, 665 to 703, and 710 to 748; these read EHHS…QTKA, ISKS…NLCE, VCSA…QQLQ, PEPI…CAMS, AHCG…LKVS, VQVP…KVLE, and GHRA…AHKL.

Belongs to the WD repeat WDR91 family. Interacts with WDR81; involved in early to late endosome cargo transport. Interacts with BECN1; negatively regulates the PI3 kinase/PI3K activity associated with endosomal membranes.

It is found in the early endosome membrane. The protein resides in the late endosome membrane. Its function is as follows. Functions as a negative regulator of the PI3 kinase/PI3K activity associated with endosomal membranes via BECN1, a core subunit of the PI3K complex. By modifying the phosphatidylinositol 3-phosphate/PtdInsP3 content of endosomal membranes may regulate endosome fusion, recycling, sorting and early to late endosome transport. It is for instance, required for the delivery of cargos like BST2/tetherin from early to late endosome and thereby participates indirectly to their degradation by the lysosome. May play a role in meiosis. The polypeptide is WD repeat-containing protein 91 (Mus musculus (Mouse)).